The chain runs to 109 residues: Cell division protein ZapA (109 aa).

Residues 21-100 are a coiled coil; the sequence is PDQRDALNQA…EQALLERGRI (80 aa).

Belongs to the ZapA family. Type 1 subfamily. In terms of assembly, homodimer. Interacts with FtsZ.

The protein resides in the cytoplasm. Activator of cell division through the inhibition of FtsZ GTPase activity, therefore promoting FtsZ assembly into bundles of protofilaments necessary for the formation of the division Z ring. It is recruited early at mid-cell but it is not essential for cell division. The protein is Cell division protein ZapA of Shigella dysenteriae serotype 1 (strain Sd197).